A 252-amino-acid chain; its full sequence is Thiazole synthase (252 aa).

Lysine 91 acts as the Schiff-base intermediate with DXP in catalysis. Residues glycine 152, 179–180 (AG), and 201–202 (NT) each bind 1-deoxy-D-xylulose 5-phosphate.

It belongs to the ThiG family. Homotetramer. Forms heterodimers with either ThiH or ThiS.

It localises to the cytoplasm. It carries out the reaction [ThiS sulfur-carrier protein]-C-terminal-Gly-aminoethanethioate + 2-iminoacetate + 1-deoxy-D-xylulose 5-phosphate = [ThiS sulfur-carrier protein]-C-terminal Gly-Gly + 2-[(2R,5Z)-2-carboxy-4-methylthiazol-5(2H)-ylidene]ethyl phosphate + 2 H2O + H(+). It participates in cofactor biosynthesis; thiamine diphosphate biosynthesis. Catalyzes the rearrangement of 1-deoxy-D-xylulose 5-phosphate (DXP) to produce the thiazole phosphate moiety of thiamine. Sulfur is provided by the thiocarboxylate moiety of the carrier protein ThiS. In vitro, sulfur can be provided by H(2)S. This Gluconobacter oxydans (strain 621H) (Gluconobacter suboxydans) protein is Thiazole synthase.